The primary structure comprises 245 residues: Ribonuclease P protein component 3 (245 aa).

Belongs to the eukaryotic/archaeal RNase P protein component 3 family. In terms of assembly, consists of a catalytic RNA component and at least 4-5 protein subunits.

It localises to the cytoplasm. It carries out the reaction Endonucleolytic cleavage of RNA, removing 5'-extranucleotides from tRNA precursor.. Functionally, part of ribonuclease P, a protein complex that generates mature tRNA molecules by cleaving their 5'-ends. The protein is Ribonuclease P protein component 3 of Methanothermobacter thermautotrophicus (strain ATCC 29096 / DSM 1053 / JCM 10044 / NBRC 100330 / Delta H) (Methanobacterium thermoautotrophicum).